A 303-amino-acid polypeptide reads, in one-letter code: Phosphatidylglycerol--prolipoprotein diacylglyceryl transferase (303 aa).

4 consecutive transmembrane segments (helical) span residues 18–38, 58–78, 106–126, and 133–153; these read LGPFSLRWYGLLIAISVLVGL, LLPILVLASVIGARIYYVAFE, IWGGGIAIHGALIMGTLSIIF, and EPFWDVIDVLVPSVALGQAIG. A 1,2-diacyl-sn-glycero-3-phospho-(1'-sn-glycerol) is bound at residue R154. The next 3 helical transmembrane spans lie at 193 to 213, 223 to 243, and 266 to 286; these read PTFLYESVWNIFVFGILIFLF, LPPGSLSCLYLITYSLGRFWI, and IAQLISLFLISAGLLGIWRIY.

It belongs to the Lgt family.

Its subcellular location is the cell inner membrane. The enzyme catalyses L-cysteinyl-[prolipoprotein] + a 1,2-diacyl-sn-glycero-3-phospho-(1'-sn-glycerol) = an S-1,2-diacyl-sn-glyceryl-L-cysteinyl-[prolipoprotein] + sn-glycerol 1-phosphate + H(+). It functions in the pathway protein modification; lipoprotein biosynthesis (diacylglyceryl transfer). Its function is as follows. Catalyzes the transfer of the diacylglyceryl group from phosphatidylglycerol to the sulfhydryl group of the N-terminal cysteine of a prolipoprotein, the first step in the formation of mature lipoproteins. The protein is Phosphatidylglycerol--prolipoprotein diacylglyceryl transferase of Prochlorococcus marinus (strain NATL1A).